Reading from the N-terminus, the 105-residue chain is Large ribosomal subunit protein uL24 (105 aa).

This sequence belongs to the universal ribosomal protein uL24 family. Part of the 50S ribosomal subunit.

In terms of biological role, one of two assembly initiator proteins, it binds directly to the 5'-end of the 23S rRNA, where it nucleates assembly of the 50S subunit. Functionally, one of the proteins that surrounds the polypeptide exit tunnel on the outside of the subunit. The protein is Large ribosomal subunit protein uL24 of Methylocella silvestris (strain DSM 15510 / CIP 108128 / LMG 27833 / NCIMB 13906 / BL2).